We begin with the raw amino-acid sequence, 231 residues long: 5'-methylthioadenosine/S-adenosylhomocysteine nucleosidase (231 aa).

Glutamate 13 acts as the Proton acceptor in catalysis. Substrate contacts are provided by residues glycine 79, methionine 154, and 175–176; that span reads ME. The active-site Proton donor is the aspartate 199.

This sequence belongs to the PNP/UDP phosphorylase family. MtnN subfamily.

It catalyses the reaction S-adenosyl-L-homocysteine + H2O = S-(5-deoxy-D-ribos-5-yl)-L-homocysteine + adenine. It carries out the reaction S-methyl-5'-thioadenosine + H2O = 5-(methylsulfanyl)-D-ribose + adenine. The enzyme catalyses 5'-deoxyadenosine + H2O = 5-deoxy-D-ribose + adenine. Its pathway is amino-acid biosynthesis; L-methionine biosynthesis via salvage pathway; S-methyl-5-thio-alpha-D-ribose 1-phosphate from S-methyl-5'-thioadenosine (hydrolase route): step 1/2. Functionally, catalyzes the irreversible cleavage of the glycosidic bond in both 5'-methylthioadenosine (MTA) and S-adenosylhomocysteine (SAH/AdoHcy) to adenine and the corresponding thioribose, 5'-methylthioribose and S-ribosylhomocysteine, respectively. Also cleaves 5'-deoxyadenosine, a toxic by-product of radical S-adenosylmethionine (SAM) enzymes, into 5-deoxyribose and adenine. This Marinomonas sp. (strain MWYL1) protein is 5'-methylthioadenosine/S-adenosylhomocysteine nucleosidase.